Reading from the N-terminus, the 272-residue chain is MISIDQRAMQAKPIDLEHLSAQDTALEIRNLDLSYGDKQALFNVSMKIPKKQVTAFIGPSGCGKSTLLRCINRMNDLVDSCKIKGEILLHGQNIYDKKVDVAALRRNVGMVFQRPNPFPKSIYENVVYGLRLQGLNNRRDLDEAAERSLRGAAIWDEVKDRLHDNAFGLSGGQQQRLVIARAIAIEPEVLLLDEPTSALDPISTLTIEELITELKDKYTVVIVTHNMQQAARVSDQTAFMYMGELVEYADTNTIFTTPRKRKTEDYITGRYG.

One can recognise an ABC transporter domain in the interval 26 to 267 (LEIRNLDLSY…PRKRKTEDYI (242 aa)). 58–65 (GPSGCGKS) contacts ATP.

The protein belongs to the ABC transporter superfamily. Phosphate importer (TC 3.A.1.7) family. As to quaternary structure, the complex is composed of two ATP-binding proteins (PstB), two transmembrane proteins (PstC and PstA) and a solute-binding protein (PstS).

The protein resides in the cell inner membrane. It catalyses the reaction phosphate(out) + ATP + H2O = ADP + 2 phosphate(in) + H(+). Its function is as follows. Part of the ABC transporter complex PstSACB involved in phosphate import. Responsible for energy coupling to the transport system. This Shewanella denitrificans (strain OS217 / ATCC BAA-1090 / DSM 15013) protein is Phosphate import ATP-binding protein PstB.